A 689-amino-acid polypeptide reads, in one-letter code: MQNIDFISEAEAKKLLEELSCKIAAYNHAYYIEDNPLVSDAEYDQLVNINLKLEQQFPHLVLENSPSKEVGAKIANKFVKVTHQVPMLSLSNAFDEQDVRDFVDRIKNFLRLDEFAPIFCEPKIDGLSFSAIYKNGLLITGATRGDGYVGEDITANIKTIKNFPHKIDNAPECLEVRGEIYIEKQDFLNLNEEQEEQGRDQFANPRNAAAGSLRQLDASITAKRPLKYFVYSGGVTEQNLASSQDQLLTKLKKFGFSVNEISKLTKSEEEIFAFYEYLKTNRENLPYEIDGVVYKLNDFELQNRMGFIARSPRFATAHKFPAIIGQTKLLSITVQVGRTGTLTPVAELEPIEIGGVTVSRATLHNFQEIVRKDVQIKDYVFLQRAGDVIPKITGADIEKRPNDTIAFEAPLFCPSCNSKLYYVPEDIIIRCDNGLNCPAQHYERIRHFVSKNAMDIAGLGRKQVEFLIAKGLISNPLDIFFLKKNNEASLIKLENMDGWGQKSVEKLLKNIEKSKNVSLPRFIYALGIRHIGEQNAKLLAREFGSYNNFIAQMELLSKNDSDIYQKLNNLEGIGDKILIDIIAFLDVKENIQLIKKLGEILNIEDYKETRAQSSLTGKIVVFTGSLPTISRAEVKATAEKLGAKVAASVSSNTDLVVAGLDAGSKLQKAKELNIKIIDEEEWLTLIKNA.

NAD(+) is bound by residues Asp-40–Asp-44, Ser-89–Leu-90, and Glu-121. Residue Lys-123 is the N6-AMP-lysine intermediate of the active site. NAD(+) is bound by residues Arg-144, Glu-179, Lys-295, and Lys-319. 4 residues coordinate Zn(2+): Cys-413, Cys-416, Cys-431, and Cys-437. Residues Arg-610–Ala-689 form the BRCT domain.

It belongs to the NAD-dependent DNA ligase family. LigA subfamily. Requires Mg(2+) as cofactor. It depends on Mn(2+) as a cofactor.

The catalysed reaction is NAD(+) + (deoxyribonucleotide)n-3'-hydroxyl + 5'-phospho-(deoxyribonucleotide)m = (deoxyribonucleotide)n+m + AMP + beta-nicotinamide D-nucleotide.. Its function is as follows. DNA ligase that catalyzes the formation of phosphodiester linkages between 5'-phosphoryl and 3'-hydroxyl groups in double-stranded DNA using NAD as a coenzyme and as the energy source for the reaction. It is essential for DNA replication and repair of damaged DNA. The protein is DNA ligase of Rickettsia akari (strain Hartford).